A 248-amino-acid polypeptide reads, in one-letter code: Triosephosphate isomerase (248 aa).

9–11 (NWK) is a binding site for substrate. H95 serves as the catalytic Electrophile. The active-site Proton acceptor is the E166. Substrate is bound by residues G172, S210, and 231–232 (GG).

This sequence belongs to the triosephosphate isomerase family. As to quaternary structure, homodimer.

It localises to the cytoplasm. It catalyses the reaction D-glyceraldehyde 3-phosphate = dihydroxyacetone phosphate. It participates in carbohydrate biosynthesis; gluconeogenesis. Its pathway is carbohydrate degradation; glycolysis; D-glyceraldehyde 3-phosphate from glycerone phosphate: step 1/1. Involved in the gluconeogenesis. Catalyzes stereospecifically the conversion of dihydroxyacetone phosphate (DHAP) to D-glyceraldehyde-3-phosphate (G3P). In Delftia acidovorans (strain DSM 14801 / SPH-1), this protein is Triosephosphate isomerase.